Here is a 491-residue protein sequence, read N- to C-terminus: Cytochrome P450 81F2 (491 aa).

A helical transmembrane segment spans residues 283-303; it reads VIIKGLMLSMMLAGTDTAAVT. Cysteine 429 contacts heme.

It belongs to the cytochrome P450 family. Heme serves as cofactor.

It is found in the membrane. It functions in the pathway secondary metabolite biosynthesis. Involved in indole glucosinolate biosynthesis. Catalyzes hydroxylation reactions of the glucosinolate indole ring. Converts indol-3-yl-methylglucosinolate (I3M) to 4-hydroxy-indol-3-yl-methylglucosinolate (4OH-I3M) and/or 1-hydroxy-indol-3-yl-methylglucosinolate (1OH-I3M) intermediates. These hydroxy intermediates are converted to 4-methoxy-indol-3-yl-methylglucosinolate (4MO-I3M) and 1-methoxy-indol-3-yl-methylglucosinolate (1MO-I3M) by indole glucosinolate methyltransferase 1 and 2 (IGMT1 and IGMT2). Contributes to defense against the green peach aphid (Myzus persicae), a generalist phloem-feeding herbivore. Required for the biosynthesis of antifungal indole glucosinolate metabolites. Required for the pathogen-induced accumulation of 4MO-I3M, which in turn is activated by the atypical BGLU26/PEN2 myrosinase. Required for the biosynthesis of Trp-derived antifungal compounds and non-host resistance to the necrotrophic fungal pathogen Plectosphaerella cucumerina. Required for resistance to the non-adapted fungal pathogen Colletotrichum gloeosporioides. In Arabidopsis thaliana (Mouse-ear cress), this protein is Cytochrome P450 81F2.